Here is a 210-residue protein sequence, read N- to C-terminus: Scoloptoxin SSD552 (210 aa).

Positions 1–23 are cleaved as a signal peptide; that stretch reads MNILLSSTLFVLLMFQIIGSGMG.

Contains 3 disulfide bonds. In terms of tissue distribution, expressed by the venom gland.

It is found in the secreted. In Scolopendra dehaani (Thai centipede), this protein is Scoloptoxin SSD552.